Here is a 66-residue protein sequence, read N- to C-terminus: Cell division protein FtsB (66 aa).

Residues 1-3 lie on the Cytoplasmic side of the membrane; the sequence is MKM. A helical transmembrane segment spans residues 4–21; the sequence is LKIFLLFLLFWLQCSLWI. Over 22-66 the chain is Extracellular; that stretch reads GKNGILDYIKIYKKIIVQKKKNEDFQIRNNQLILEIERLNNAIKN. Residues 38-66 adopt a coiled-coil conformation; that stretch reads VQKKKNEDFQIRNNQLILEIERLNNAIKN.

Belongs to the FtsB family.

It is found in the cell membrane. Functionally, essential cell division protein. May link together the upstream cell division proteins, which are predominantly cytoplasmic, with the downstream cell division proteins, which are predominantly extracellular. The polypeptide is Cell division protein FtsB (Buchnera aphidicola subsp. Schizaphis graminum (strain Sg)).